Here is a 1758-residue protein sequence, read N- to C-terminus: uncharacterized protein (1758 aa).

The first 12 residues, 1–12 (MCFFLGSRLAYA), serve as a signal peptide directing secretion. One can recognise an Autotransporter domain in the interval 1465–1758 (ENLYNNGMWI…SFILGGNYYF (294 aa)).

Its subcellular location is the cell outer membrane. This is an uncharacterized protein from Escherichia coli (strain K12).